The chain runs to 406 residues: Angiopoietin-related protein 4 (406 aa).

The N-terminal stretch at Met1–Gly25 is a signal peptide. Residues Glu100–Gln143 are a coiled coil. N-linked (GlcNAc...) asparagine glycosylation occurs at Asn177. Residues Ser179–Ala401 form the Fibrinogen C-terminal domain. 2 disulfide bridges follow: Cys188–Cys216 and Cys341–Cys354.

In terms of assembly, homooligomer; disulfide-linked via Cys residues in the N-terminal part of the protein. The homooligomer undergoes proteolytic processing to release the ANGPTL4 C-terminal chain, which circulates as a monomer. The homooligomer unprocessed form is able to interact with the extracellular matrix. Post-translationally, N-glycosylated. Forms disulfide-linked dimers and tetramers. In terms of processing, cleaved into a smaller N-terminal chain and a larger chain that contains the fibrinogen C-terminal domain; both cleaved and uncleaved forms are detected in the extracellular space. The cleaved form is not present within the cell. In terms of tissue distribution, detected in blood plasma (at protein level). Detected in liver. Detected in white fat tissue and placenta. Expressed at high levels in the placenta, heart, liver, muscle, pancreas and lung but expressed poorly in the brain and kidney.

It localises to the secreted. Its subcellular location is the extracellular space. The protein resides in the extracellular matrix. Its function is as follows. Mediates inactivation of the lipoprotein lipase LPL, and thereby plays a role in the regulation of triglyceride clearance from the blood serum and in lipid metabolism. May also play a role in regulating glucose homeostasis and insulin sensitivity. Inhibits proliferation, migration, and tubule formation of endothelial cells and reduces vascular leakage. Upon heterologous expression, inhibits the adhesion of endothelial cell to the extracellular matrix (ECM), and inhibits the reorganization of the actin cytoskeleton, formation of actin stress fibers and focal adhesions in endothelial cells that have adhered to ANGPTL4-containing ECM (in vitro). Depending on context, may modulate tumor-related angiogenesis. Functionally, mediates inactivation of the lipoprotein lipase LPL, and thereby plays an important role in the regulation of triglyceride clearance from the blood serum and in lipid metabolism. Has higher activity in LPL inactivation than the uncleaved protein. The sequence is that of Angiopoietin-related protein 4 (ANGPTL4) from Homo sapiens (Human).